A 519-amino-acid chain; its full sequence is Ribonuclease Y 1 (519 aa).

The chain crosses the membrane as a helical span at residues 3–23 (VPIVILAIIAIVVGVVGGYYL). Residues 92 to 120 (QREETLDRKDNSLEKRENSLNRRDKKLSA) show a composition bias toward basic and acidic residues. The disordered stretch occupies residues 92 to 124 (QREETLDRKDNSLEKRENSLNRRDKKLSAEEQN). A KH domain is found at 209–272 (TITVVTLPND…EVAKIALEKL (64 aa)). The 94-residue stretch at 335 to 428 (ALAHSIEVAK…VSTADIISAT (94 aa)) folds into the HD domain.

Belongs to the RNase Y family.

It localises to the cell membrane. Functionally, endoribonuclease that initiates mRNA decay. This is Ribonuclease Y 1 from Levilactobacillus brevis (strain ATCC 367 / BCRC 12310 / CIP 105137 / JCM 1170 / LMG 11437 / NCIMB 947 / NCTC 947) (Lactobacillus brevis).